The following is a 495-amino-acid chain: Ribosomal protein uS12 methylthiotransferase RimO (495 aa).

The MTTase N-terminal domain occupies 5 to 121 (RTVALVTLGC…ISDRLQTILN (117 aa)). [4Fe-4S] cluster-binding residues include C14, C50, and C84. Residues 145 to 183 (QSAGADVALPGHGAPEGLPEDLPEGLAPESGPRAPLRRR) are disordered. One can recognise a Radical SAM core domain in the interval 184–415 (LDGSPVASVK…RLAEELVAQR (232 aa)). Positions 198, 202, and 205 each coordinate [4Fe-4S] cluster. Residues 417–484 (EERVGETVHV…GVDLVAEPLP (68 aa)) enclose the TRAM domain.

Belongs to the methylthiotransferase family. RimO subfamily. [4Fe-4S] cluster serves as cofactor.

It is found in the cytoplasm. The enzyme catalyses L-aspartate(89)-[ribosomal protein uS12]-hydrogen + (sulfur carrier)-SH + AH2 + 2 S-adenosyl-L-methionine = 3-methylsulfanyl-L-aspartate(89)-[ribosomal protein uS12]-hydrogen + (sulfur carrier)-H + 5'-deoxyadenosine + L-methionine + A + S-adenosyl-L-homocysteine + 2 H(+). In terms of biological role, catalyzes the methylthiolation of an aspartic acid residue of ribosomal protein uS12. In Streptomyces avermitilis (strain ATCC 31267 / DSM 46492 / JCM 5070 / NBRC 14893 / NCIMB 12804 / NRRL 8165 / MA-4680), this protein is Ribosomal protein uS12 methylthiotransferase RimO.